The primary structure comprises 433 residues: PHO85 cyclin-10 (433 aa).

A compositionally biased stretch (basic and acidic residues) spans 1–10; it reads MDMTKNHTTD. Disordered regions lie at residues 1 to 20 and 51 to 81; these read MDMT…GDIR and LTSE…TTDS. A compositionally biased stretch (polar residues) spans 51-63; that stretch reads LTSEWDQSRSNTP.

This sequence belongs to the cyclin family. PHO80 subfamily. In terms of assembly, forms a cyclin-CDK complex with PHO85. Interacts with GSY2, independent of the presence of PHO85.

It is found in the cytoplasm. Functionally, cyclin partner of the cyclin-dependent kinase (CDK) PHO85. Together with cyclin PCL8, negatively controls glycogen accumulation under favorable growth conditions. The PCL10-PHO85 cyclin-CDK holoenzyme has glycogen synthase kinase activity and phosphorylates and negatively regulates glycogen synthase GSY2. Also has minor GLC8 kinase activity. This chain is PHO85 cyclin-10 (PCL10), found in Saccharomyces cerevisiae (strain ATCC 204508 / S288c) (Baker's yeast).